Reading from the N-terminus, the 251-residue chain is DNA repair protein RecO (251 aa).

Belongs to the RecO family.

Functionally, involved in DNA repair and RecF pathway recombination. The protein is DNA repair protein RecO of Lactococcus lactis subsp. cremoris (strain MG1363).